A 633-amino-acid polypeptide reads, in one-letter code: MNIRSNPDTTLPAVTTGPLPSSRKIYAAPDSAPDLRVPLREIILSEAAGEPNLPVYDTSGPYTDPSVTIDVNAGLPRNRTAWVLERGGVEEYEGRDIKPEDNGNVGADKAAKAFIAHHKPLRGLDGHKITQLEFARAGIITKEMIYVAERENLGRKQQLERAEAALADGESFGAEVPAFITPEFVRSEIARGRAIIPCNINHAELEPMIIGRNFLTKINANIGNSAVTSSVEEEVDKMVWAIRWGADTVMDLSTGRNIHTTREWILRNSPVPIGTVPIYQALEKCNGDPVKLTWELYKDTLIEQCEQGVDYFTIHAGVRLQYIHLTASRVTGIVSRGGSIMAKWCLAHHKESFLYTHFDEICDIMRKYDVSFSLGDGLRPGSIADANDRAQFAELETLGELTKIAWDKGCQVMIEGPGHVPMHKIKINMDKQLKECGEAPFYTLGPLTTDIAPGYDHITSGIGAAMIGWFGCAMLCYVTPKEHLGLPDRNDVKTGVITYKIAAHAADLAKGHPAAQLRDDALSRARFEFRWTDQFNLGLDPDTAKSFHDETLPKEAHKVAHFCSMCGPKFCSMKITQDVRDYAATLNDPTTVGVTISGTIEDGMAQMSAKFKEMGGSVYLDADKVKESNKALS.

The segment covering 1–13 (MNIRSNPDTTLPA) has biased composition (polar residues). Residues 1–22 (MNIRSNPDTTLPAVTTGPLPSS) form a disordered region. Substrate-binding positions include N221, M250, Y279, H315, 335-337 (SRG), 376-379 (DGLR), and E415. H419 is a binding site for Zn(2+). Y442 is a substrate binding site. Zn(2+) is bound at residue H483. The [4Fe-4S] cluster site is built by C563, C566, and C571.

The protein belongs to the ThiC family. Homodimer. [4Fe-4S] cluster serves as cofactor.

It carries out the reaction 5-amino-1-(5-phospho-beta-D-ribosyl)imidazole + S-adenosyl-L-methionine = 4-amino-2-methyl-5-(phosphooxymethyl)pyrimidine + CO + 5'-deoxyadenosine + formate + L-methionine + 3 H(+). The protein operates within cofactor biosynthesis; thiamine diphosphate biosynthesis. Functionally, catalyzes the synthesis of the hydroxymethylpyrimidine phosphate (HMP-P) moiety of thiamine from aminoimidazole ribotide (AIR) in a radical S-adenosyl-L-methionine (SAM)-dependent reaction. In Bradyrhizobium sp. (strain BTAi1 / ATCC BAA-1182), this protein is Phosphomethylpyrimidine synthase.